The sequence spans 567 residues: Protein ESMERALDA 1 (567 aa).

Residues 1–41 are disordered; it reads MLAKNRLPGSGHTTPSPPASPRRSPRYRHGRSKAAAGSRFP. Topologically, residues 1–65 are cytoplasmic; sequence MLAKNRLPGS…ILLSVLLRRQ (65 aa). The span at 23 to 32 shows a compositional bias: basic residues; the sequence is RSPRYRHGRS. Residues 66-86 traverse the membrane as a helical; Signal-anchor for type II membrane protein segment; the sequence is GIFLFAPLIYISCMLLYMGTV. Residues 87 to 567 lie on the Lumenal side of the membrane; the sequence is SFDVVPIIQR…TPESRPPPAT (481 aa). Asn121, Asn145, Asn184, and Asn238 each carry an N-linked (GlcNAc...) asparagine glycan. Position 331–333 (331–333) interacts with substrate; that stretch reads HLR. 5 N-linked (GlcNAc...) asparagine glycosylation sites follow: Asn403, Asn419, Asn449, Asn538, and Asn554.

This sequence belongs to the glycosyltransferase GT106 family. As to expression, ubiquitous.

It localises to the golgi apparatus membrane. The protein operates within protein modification; protein glycosylation. In terms of biological role, glycosyltransferase that plays a role in cell adhesion. The sequence is that of Protein ESMERALDA 1 from Arabidopsis thaliana (Mouse-ear cress).